The primary structure comprises 631 residues: Glutamyl-tRNA(Gln) amidotransferase subunit E (631 aa).

The protein belongs to the GatB/GatE family. GatE subfamily. As to quaternary structure, heterodimer of GatD and GatE.

The catalysed reaction is L-glutamyl-tRNA(Gln) + L-glutamine + ATP + H2O = L-glutaminyl-tRNA(Gln) + L-glutamate + ADP + phosphate + H(+). In terms of biological role, allows the formation of correctly charged Gln-tRNA(Gln) through the transamidation of misacylated Glu-tRNA(Gln) in organisms which lack glutaminyl-tRNA synthetase. The reaction takes place in the presence of glutamine and ATP through an activated gamma-phospho-Glu-tRNA(Gln). The GatDE system is specific for glutamate and does not act on aspartate. This chain is Glutamyl-tRNA(Gln) amidotransferase subunit E, found in Methanococcus maripaludis (strain DSM 14266 / JCM 13030 / NBRC 101832 / S2 / LL).